A 95-amino-acid chain; its full sequence is Large ribosomal subunit protein uL23 (95 aa).

It belongs to the universal ribosomal protein uL23 family. Part of the 50S ribosomal subunit. Contacts protein L29, and trigger factor when it is bound to the ribosome.

Functionally, one of the early assembly proteins it binds 23S rRNA. One of the proteins that surrounds the polypeptide exit tunnel on the outside of the ribosome. Forms the main docking site for trigger factor binding to the ribosome. This chain is Large ribosomal subunit protein uL23, found in Bacillus pumilus (strain SAFR-032).